A 305-amino-acid chain; its full sequence is Methionyl-tRNA formyltransferase (305 aa).

108-111 (SLLP) lines the (6S)-5,6,7,8-tetrahydrofolate pocket.

The protein belongs to the Fmt family.

It carries out the reaction L-methionyl-tRNA(fMet) + (6R)-10-formyltetrahydrofolate = N-formyl-L-methionyl-tRNA(fMet) + (6S)-5,6,7,8-tetrahydrofolate + H(+). Functionally, attaches a formyl group to the free amino group of methionyl-tRNA(fMet). The formyl group appears to play a dual role in the initiator identity of N-formylmethionyl-tRNA by promoting its recognition by IF2 and preventing the misappropriation of this tRNA by the elongation apparatus. The polypeptide is Methionyl-tRNA formyltransferase (Clavibacter michiganensis subsp. michiganensis (strain NCPPB 382)).